Reading from the N-terminus, the 326-residue chain is Tagatose 1,6-diphosphate aldolase (326 aa).

This sequence belongs to the aldolase LacD family.

It carries out the reaction D-tagatofuranose 1,6-bisphosphate = D-glyceraldehyde 3-phosphate + dihydroxyacetone phosphate. The protein operates within carbohydrate metabolism; D-tagatose 6-phosphate degradation; D-glyceraldehyde 3-phosphate and glycerone phosphate from D-tagatose 6-phosphate: step 2/2. The polypeptide is Tagatose 1,6-diphosphate aldolase (Staphylococcus aureus (strain MW2)).